An 886-amino-acid polypeptide reads, in one-letter code: CRM-domain containing factor CFM3, chloroplastic/mitochondrial (886 aa).

The transit peptide at 1-70 (MAAAAMAISP…LDLRPEPSPS (70 aa)) directs the protein to the chloroplast and mitochondrion. Disordered stretches follow at residues 56–84 (RPASALDLRPEPSPSSDSDDDAAFGTSRS) and 269–291 (TKGTSKNTQTLGMKSSIKEPPGH). 3 CRM domains span residues 174 to 270 (LTLP…EPTK), 378 to 475 (PSLS…ELAE), and 590 to 690 (ETIT…SKLR). The span at 270-281 (KGTSKNTQTLGM) shows a compositional bias: polar residues. Residues 771–886 (SFDNSVAVQN…QSTELTNTCS (116 aa)) form a disordered region. A compositionally biased stretch (acidic residues) spans 793-827 (NSDDEGDYSDEDDDEDDDNDEEDGFDYENDDEDDV). 2 stretches are compositionally biased toward polar residues: residues 841–852 (DFGSSDSENYVS) and 869–886 (DSRNSYSEQSTELTNTCS).

In terms of assembly, interacts with RNA. Part of large ribonucleo-protein particles that contain CAF1 and/or CAF2, and RNC1.

It is found in the plastid. The protein localises to the chloroplast. The protein resides in the mitochondrion. Its function is as follows. Binds specific group II introns in chloroplasts and facilitates their splicing. Acts on subgroup IIB introns. The substrates of the subgroup IIB also require the CRM domain proteins CAF1 or CAF2, with a simultaneous binding of CFM3 and CAF1 or CAF2. May influence the biogenesis of the mitochondrial small ribosomal subunit. The polypeptide is CRM-domain containing factor CFM3, chloroplastic/mitochondrial (Oryza sativa subsp. japonica (Rice)).